The primary structure comprises 277 residues: Phosphatidylglycerol--prolipoprotein diacylglyceryl transferase (277 aa).

The next 4 helical transmembrane spans lie at 18–38 (IAIY…YFMA), 54–74 (DLLV…YVIF), 91–111 (EGGI…IVFA), and 115–135 (GLSF…GQAI). Arginine 137 contributes to the a 1,2-diacyl-sn-glycero-3-phospho-(1'-sn-glycerol) binding site. 3 helical membrane passes run 177–197 (QPTF…LLLL), 205–225 (GELF…IEGM), and 236–256 (LRTA…LWVY).

It belongs to the Lgt family.

It localises to the cell membrane. The enzyme catalyses L-cysteinyl-[prolipoprotein] + a 1,2-diacyl-sn-glycero-3-phospho-(1'-sn-glycerol) = an S-1,2-diacyl-sn-glyceryl-L-cysteinyl-[prolipoprotein] + sn-glycerol 1-phosphate + H(+). It functions in the pathway protein modification; lipoprotein biosynthesis (diacylglyceryl transfer). Catalyzes the transfer of the diacylglyceryl group from phosphatidylglycerol to the sulfhydryl group of the N-terminal cysteine of a prolipoprotein, the first step in the formation of mature lipoproteins. In Shouchella clausii (strain KSM-K16) (Alkalihalobacillus clausii), this protein is Phosphatidylglycerol--prolipoprotein diacylglyceryl transferase.